The following is a 426-amino-acid chain: Chaperone SurA (426 aa).

The signal sequence occupies residues 1–19 (MGRVLVTIFVLFWPIGSFA). PpiC domains lie at 169-270 (DAQY…KLLD) and 280-379 (VTQT…QVLD).

It is found in the periplasm. It catalyses the reaction [protein]-peptidylproline (omega=180) = [protein]-peptidylproline (omega=0). In terms of biological role, chaperone involved in the correct folding and assembly of outer membrane proteins. Recognizes specific patterns of aromatic residues and the orientation of their side chains, which are found more frequently in integral outer membrane proteins. May act in both early periplasmic and late outer membrane-associated steps of protein maturation. The sequence is that of Chaperone SurA from Nitrosococcus oceani (strain ATCC 19707 / BCRC 17464 / JCM 30415 / NCIMB 11848 / C-107).